The chain runs to 382 residues: Chaperone protein DnaJ (382 aa).

The 66-residue stretch at 5–70 (DYYEVLGVSR…DKKAAYDRYG (66 aa)) folds into the J domain. The CR-type zinc-finger motif lies at 141–219 (GVQKTINVPA…CHGAGRVEKE (79 aa)). 8 residues coordinate Zn(2+): Cys-154, Cys-157, Cys-171, Cys-174, Cys-193, Cys-196, Cys-207, and Cys-210. CXXCXGXG motif repeat units follow at residues 154 to 161 (CDACKGTG), 171 to 178 (CPTCSGMG), 193 to 200 (CPTCNGMG), and 207 to 214 (CKVCHGAG).

It belongs to the DnaJ family. In terms of assembly, homodimer. The cofactor is Zn(2+).

It localises to the cytoplasm. Participates actively in the response to hyperosmotic and heat shock by preventing the aggregation of stress-denatured proteins and by disaggregating proteins, also in an autonomous, DnaK-independent fashion. Unfolded proteins bind initially to DnaJ; upon interaction with the DnaJ-bound protein, DnaK hydrolyzes its bound ATP, resulting in the formation of a stable complex. GrpE releases ADP from DnaK; ATP binding to DnaK triggers the release of the substrate protein, thus completing the reaction cycle. Several rounds of ATP-dependent interactions between DnaJ, DnaK and GrpE are required for fully efficient folding. Also involved, together with DnaK and GrpE, in the DNA replication of plasmids through activation of initiation proteins. This is Chaperone protein DnaJ from Cereibacter sphaeroides (strain ATCC 17029 / ATH 2.4.9) (Rhodobacter sphaeroides).